The sequence spans 390 residues: MNRIWLFFSVMFVIGTDTFLLSPLLPLLQDQFHVSTDLSGWMVSAYALGYALFAFIAGPISDRLNRKTVMLWGLAGFIVSTFLCGIAPSFAAMCLFRFAAGVSAAFVTPQIWASIPVIVQPSQIIKGMGIATAGLAASQMLGLPIGGFLASFTWHTPFFVLSACSLILLLILAAVMPGIRPSEPLARPSIVNPYRELFSLPKTSVILLAYFLFQTGNFASFSFLGTWLSADYHLTVSQIGAAMLVLGLGNMLGSLIGSRVSEKLGMFKTLISGMLLMGALYFALPFFPNLFLVEAGFFLTFFTAGIIFPLMMGVFQSIAPNARGTIASLSNAAMYAGTTVGTSIAGFLYQSTQHFGAVTGFTAILFILSMTLYQTISKTGKRQSTARAQL.

12 consecutive transmembrane segments (helical) span residues 4-24 (IWLFFSVMFVIGTDTFLLSPL), 40-60 (GWMVSAYALGYALFAFIAGPI), 68-88 (TVMLWGLAGFIVSTFLCGIAP), 98-118 (FAAGVSAAFVTPQIWASIPVI), 130-150 (IATAGLAASQMLGLPIGGFLA), 159-179 (FVLSACSLILLLILAAVMPGI), 205-225 (VILLAYFLFQTGNFASFSFLG), 236-256 (VSQIGAAMLVLGLGNMLGSLI), 273-293 (GMLLMGALYFALPFFPNLFLV), 295-315 (AGFFLTFFTAGIIFPLMMGVF), 329-349 (LSNAAMYAGTTVGTSIAGFLY), and 356-376 (GAVTGFTAILFILSMTLYQTI).

It belongs to the major facilitator superfamily.

The protein localises to the cell membrane. This is an uncharacterized protein from Bacillus subtilis (strain 168).